Consider the following 188-residue polypeptide: Putative protein SSX6 (188 aa).

2 disordered regions span residues 1 to 22 (MNGD…EKRS) and 74 to 188 (KRAT…EDDK). Residues 20–83 (KRSKAFDDIA…KRATDSQRND (64 aa)) enclose the KRAB-related domain. Composition is skewed to basic and acidic residues over residues 75-96 (RATD…EVER) and 112-122 (MPEKPAEEGSD). Serine 123 bears the Phosphoserine mark. The span at 147–156 (SSEKIHERSG) shows a compositional bias: basic and acidic residues. The segment covering 157–170 (PKRGKHAWTHRLRE) has biased composition (basic residues). The segment covering 179 to 188 (EISDPEEDDK) has biased composition (acidic residues).

The protein belongs to the SSX family. In terms of tissue distribution, not detected in any normal tissues. Expressed in a melanoma cell line.

In terms of biological role, could act as a modulator of transcription. This chain is Putative protein SSX6, found in Homo sapiens (Human).